We begin with the raw amino-acid sequence, 211 residues long: Claudin-1 (211 aa).

Over 1-7 (MANAGLQ) the chain is Cytoplasmic. A helical membrane pass occupies residues 8 to 28 (LLGFILASLGWIGSIVSTALP). Residues 29–81 (QWKIYSYAGDNIVTAQAIYEGLWMSCVSQSTGQIQCKVFDSLLNLNSTLQATR) lie on the Extracellular side of the membrane. A disulfide bridge connects residues Cys54 and Cys64. A helical transmembrane segment spans residues 82–102 (ALMVIGILLGLIAIFVSTIGM). Residues 103–115 (KCMRCLEDDEVQK) are Cytoplasmic-facing. Residues 116 to 136 (MWMAVIGGIIFLISGLATLVA) traverse the membrane as a helical segment. Over 137–163 (TAWYGNRIVQEFYDPLTPINARYEFGQ) the chain is Extracellular. A helical membrane pass occupies residues 164 to 184 (ALFTGWAAASLCLLGGVLLSC). Over 185–211 (SCPRKTTSYPTPRPYPKPTPSSGKDYV) the chain is Cytoplasmic. Residues 190–211 (TTSYPTPRPYPKPTPSSGKDYV) form a disordered region. The segment at 210-211 (YV) is interactions with TJP1, TJP2, TJP3 and PATJ.

Belongs to the claudin family. As to quaternary structure, can form homo- and heteropolymers with other CLDN. Homopolymers interact with CLDN3, but not CLDN2, homopolymers. Directly interacts with TJP1/ZO-1, TJP2/ZO-2 and TJP3/ZO-3. Interacts with MPDZ and PATJ. Interacts with OCLN, CD81, CLDN4, CLDN6 and CLDN9. As to expression, detected in epidermis and liver (at protein level). Widely expressed, with highest levels in liver and kidney.

It localises to the cell junction. Its subcellular location is the tight junction. It is found in the cell membrane. The protein localises to the basolateral cell membrane. Claudins function as major constituents of the tight junction complexes that regulate the permeability of epithelia. While some claudin family members play essential roles in the formation of impermeable barriers, others mediate the permeability to ions and small molecules. Often, several claudin family members are coexpressed and interact with each other, and this determines the overall permeability. CLDN1 is required to prevent the paracellular diffusion of small molecules through tight junctions in the epidermis and is required for the normal barrier function of the skin. Required for normal water homeostasis and to prevent excessive water loss through the skin, probably via an indirect effect on the expression levels of other proteins, since CLDN1 itself seems to be dispensable for water barrier formation in keratinocyte tight junctions. The sequence is that of Claudin-1 (Cldn1) from Mus musculus (Mouse).